The chain runs to 248 residues: Cobalt transport protein CbiM (248 aa).

An N-terminal signal peptide occupies residues 1-29; sequence MKRVSVKNYLVCLLIAVCAIFVFPANASA. Transmembrane regions (helical) follow at residues 40-60, 72-92, 104-124, 136-156, 167-187, and 210-230; these read GWCISWGVMCMPFLVIGFFSI, TLLAMCGAFAFVLSALKMPSV, LGAVLFGPTAMSVIGAIILLF, TLGANVFSMAIVGPLVSFGVF, GLAVFLAVFFGDLMTYVITSV, and IFGFTQVPLAVCEGLLTVVIY.

This sequence belongs to the CbiM family. In terms of assembly, forms an energy-coupling factor (ECF) transporter complex composed of an ATP-binding protein (A component, CbiO), a transmembrane protein (T component, CbiQ) and 2 possible substrate-capture proteins (S components, CbiM and CbiN) of unknown stoichimetry.

Its subcellular location is the cell membrane. It participates in cofactor biosynthesis; adenosylcobalamin biosynthesis. Part of the energy-coupling factor (ECF) transporter complex CbiMNOQ involved in cobalt import. In Ruminiclostridium cellulolyticum (strain ATCC 35319 / DSM 5812 / JCM 6584 / H10) (Clostridium cellulolyticum), this protein is Cobalt transport protein CbiM.